Here is a 200-residue protein sequence, read N- to C-terminus: Max dimerization protein 3 (200 aa).

Disordered regions lie at residues glutamate 26 to arginine 56 and leucine 134 to leucine 164. Residues asparagine 54–leucine 106 form the bHLH domain.

In terms of assembly, efficient DNA binding requires dimerization with another bHLH protein. Binds DNA as a heterodimer with MAX.

Its subcellular location is the nucleus. In terms of biological role, transcriptional repressor. Binds with MAX to form a sequence-specific DNA-binding protein complex which recognizes the core sequence 5'-CAC[GA]TG-3'. This chain is Max dimerization protein 3 (mxd3), found in Xenopus tropicalis (Western clawed frog).